The chain runs to 375 residues: Chaperone protein DnaJ (375 aa).

The J domain maps to 5 to 69 (DYYEILGIDK…QKRAQYDQFG (65 aa)). The CR-type zinc-finger motif lies at 131 to 213 (GKETDIEIPK…CGGSGTVQKN (83 aa)). Zn(2+) contacts are provided by Cys-144, Cys-147, Cys-161, Cys-164, Cys-187, Cys-190, Cys-201, and Cys-204. CXXCXGXG motif repeat units follow at residues 144 to 151 (CDTCNGSG), 161 to 168 (CSHCHGSG), 187 to 194 (CNYCQGTG), and 201 to 208 (CNTCGGSG).

This sequence belongs to the DnaJ family. In terms of assembly, homodimer. It depends on Zn(2+) as a cofactor.

It is found in the cytoplasm. Functionally, participates actively in the response to hyperosmotic and heat shock by preventing the aggregation of stress-denatured proteins and by disaggregating proteins, also in an autonomous, DnaK-independent fashion. Unfolded proteins bind initially to DnaJ; upon interaction with the DnaJ-bound protein, DnaK hydrolyzes its bound ATP, resulting in the formation of a stable complex. GrpE releases ADP from DnaK; ATP binding to DnaK triggers the release of the substrate protein, thus completing the reaction cycle. Several rounds of ATP-dependent interactions between DnaJ, DnaK and GrpE are required for fully efficient folding. Also involved, together with DnaK and GrpE, in the DNA replication of plasmids through activation of initiation proteins. The chain is Chaperone protein DnaJ from Oceanobacillus iheyensis (strain DSM 14371 / CIP 107618 / JCM 11309 / KCTC 3954 / HTE831).